Consider the following 88-residue polypeptide: Small ribosomal subunit protein bS16 (88 aa).

The protein belongs to the bacterial ribosomal protein bS16 family.

This Mesomycoplasma hyopneumoniae (strain 232) (Mycoplasma hyopneumoniae) protein is Small ribosomal subunit protein bS16.